The following is a 525-amino-acid chain: Cytochrome P450 4V2 (525 aa).

A helical transmembrane segment spans residues 13–33 (LLLWGAASAVSLAGASLVLSL). Glutamate 329 and cysteine 467 together coordinate heme.

This sequence belongs to the cytochrome P450 family. The cofactor is heme.

It localises to the endoplasmic reticulum membrane. It catalyses the reaction dodecanoate + reduced [NADPH--hemoprotein reductase] + O2 = 12-hydroxydodecanoate + oxidized [NADPH--hemoprotein reductase] + H2O + H(+). The catalysed reaction is tetradecanoate + reduced [NADPH--hemoprotein reductase] + O2 = 14-hydroxytetradecanoate + oxidized [NADPH--hemoprotein reductase] + H2O + H(+). The enzyme catalyses hexadecanoate + reduced [NADPH--hemoprotein reductase] + O2 = 16-hydroxyhexadecanoate + oxidized [NADPH--hemoprotein reductase] + H2O + H(+). It carries out the reaction (5Z,8Z,11Z,14Z,17Z)-eicosapentaenoate + reduced [NADPH--hemoprotein reductase] + O2 = 20-hydroxy-(5Z,8Z,11Z,14Z,17Z)-eicosapentaenoate + oxidized [NADPH--hemoprotein reductase] + H2O + H(+). It catalyses the reaction (4Z,7Z,10Z,13Z,16Z,19Z)-docosahexaenoate + reduced [NADPH--hemoprotein reductase] + O2 = 22-hydroxy-(4Z,7Z,10Z,13Z,16Z,19Z)-docosahexaenoate + oxidized [NADPH--hemoprotein reductase] + H2O + H(+). The protein operates within lipid metabolism; fatty acid metabolism. Its activity is regulated as follows. Inhibited by N-hydroxy-N'-(4-n-butyl-2-methylphenyl formamidine)(HET0016) with an IC(50) of 38 nM. Its function is as follows. A cytochrome P450 monooxygenase involved in fatty acid metabolism in the eye. Catalyzes the omega-hydroxylation of polyunsaturated fatty acids (PUFAs) docosahexaenoate (DHA) and its precursor eicosapentaenoate (EPA), and may contribute to the homeostasis of these retinal PUFAs. Omega hydroxylates saturated fatty acids such as laurate, myristate and palmitate, the catalytic efficiency decreasing in the following order: myristate &gt; laurate &gt; palmitate (C14&gt;C12&gt;C16). Mechanistically, uses molecular oxygen inserting one oxygen atom into a substrate, and reducing the second into a water molecule, with two electrons provided by NADPH via cytochrome P450 reductase (CPR; NADPH-ferrihemoprotein reductase). This chain is Cytochrome P450 4V2 (CYP4V2), found in Pongo abelii (Sumatran orangutan).